We begin with the raw amino-acid sequence, 264 residues long: MKPTTISQLRRLKETGKKFATITAYDFSFAKLFEEEGIGVMLVGDSLGMTVQGHDSTLPVTVDDIAYHTRAVRRGAPHCLLLADLPFMAYATPEQAFENSAAVMRAGANMVKIEGGQWLADTVRMLTERAVPVCGHLGLTPQSVNIFGGYKVQGRDEAAAQTLLNDALALEAAGAQLLVLECVPVALAQRITNALSIPVIGIGAGNVTDGQILVMHDAFGITGGHIPKFAKNFLAEAGDMRAAVRQYIAEVESGAYPGEEHSFH.

Mg(2+) is bound by residues Asp45 and Asp84. 3-methyl-2-oxobutanoate is bound by residues 45–46 (DS), Asp84, and Lys112. A Mg(2+)-binding site is contributed by Glu114. Glu181 acts as the Proton acceptor in catalysis.

Belongs to the PanB family. In terms of assembly, homodecamer; pentamer of dimers. Requires Mg(2+) as cofactor.

The protein resides in the cytoplasm. The enzyme catalyses 3-methyl-2-oxobutanoate + (6R)-5,10-methylene-5,6,7,8-tetrahydrofolate + H2O = 2-dehydropantoate + (6S)-5,6,7,8-tetrahydrofolate. Its pathway is cofactor biosynthesis; (R)-pantothenate biosynthesis; (R)-pantoate from 3-methyl-2-oxobutanoate: step 1/2. Functionally, catalyzes the reversible reaction in which hydroxymethyl group from 5,10-methylenetetrahydrofolate is transferred onto alpha-ketoisovalerate to form ketopantoate. This Cronobacter sakazakii (strain ATCC BAA-894) (Enterobacter sakazakii) protein is 3-methyl-2-oxobutanoate hydroxymethyltransferase.